A 338-amino-acid polypeptide reads, in one-letter code: MNAHANPRPAVRSDWTREEIAALFDLPFNDLLWQAQAAHRAAHAANEVQLSTLLSIKTGGCPEDCGYCNQSVHAETGLKATKLMDVRAVLQSAAQARDAGSTRFCMGAAWRNPKDRDMPAIVEMVKGVRQMGMETCMTLGMLTGDQARTLADAGLDYYNHNIDTAPERYDQVITTRTFEDRIETLEHVREAGINVCCGGIVGMGETRADRVGFIHALATLPVHPESVPVNALVPVKGTVLGDMLADTPLAKIDEIEFVRTVAVARITMPASMVRLSAGRESMSDAAQALCFMAGANSIFTGDKLLTTDNAGDDRDAALFARLGVTPMAAECKVELAAE.

The Radical SAM core domain occupies 46 to 270 (NEVQLSTLLS…VAVARITMPA (225 aa)). Positions 61, 65, and 68 each coordinate [4Fe-4S] cluster. [2Fe-2S] cluster is bound by residues Cys105, Cys136, Cys196, and Arg274.

This sequence belongs to the radical SAM superfamily. Biotin synthase family. In terms of assembly, homodimer. [4Fe-4S] cluster is required as a cofactor. Requires [2Fe-2S] cluster as cofactor.

It catalyses the reaction (4R,5S)-dethiobiotin + (sulfur carrier)-SH + 2 reduced [2Fe-2S]-[ferredoxin] + 2 S-adenosyl-L-methionine = (sulfur carrier)-H + biotin + 2 5'-deoxyadenosine + 2 L-methionine + 2 oxidized [2Fe-2S]-[ferredoxin]. The protein operates within cofactor biosynthesis; biotin biosynthesis; biotin from 7,8-diaminononanoate: step 2/2. Catalyzes the conversion of dethiobiotin (DTB) to biotin by the insertion of a sulfur atom into dethiobiotin via a radical-based mechanism. This Rhizorhabdus wittichii (strain DSM 6014 / CCUG 31198 / JCM 15750 / NBRC 105917 / EY 4224 / RW1) (Sphingomonas wittichii) protein is Biotin synthase.